The following is a 104-amino-acid chain: UPF0473 protein SH1304 (104 aa).

Belongs to the UPF0473 family.

The polypeptide is UPF0473 protein SH1304 (Staphylococcus haemolyticus (strain JCSC1435)).